The following is a 1030-amino-acid chain: Toll-like receptor 9 (1030 aa).

Residues 1-24 form the signal peptide; that stretch reads MGPRCTLHPLSLLVQVTALAAALA. The Extracellular portion of the chain corresponds to 25–816; it reads QGRLPAFLPC…LCLDETLSWN (792 aa). An intrachain disulfide couples Cys34 to Cys44. A DNA-binding site is contributed by 46–50; that stretch reads WLFLK. 26 LRR repeats span residues 61–84, 86–109, 121–146, 149–165, 166–189, 197–220, 222–241, 242–267, 282–305, 307–331, 332–355, 362–385, 389–412, 414–439, 469–493, 495–518, 519–542, 544–571, 573–597, 599–621, 626–649, 651–674, 675–698, 700–722, 723–746, and 748–771; these read RANV…DFVH, SSLR…HFPC, VPTL…SLVS, LSRT…LTGL, HALR…ALEV, LGNL…LPPS, ETLL…DLAN, LTAL…CREC, LSRL…WFRG, DRLQ…AFQG, LARL…HLHL, LRSL…TLQP, LPML…IFGA, PGLL…TREV, CKAF…MFAR, SRLE…QFVP, LTSL…SFTE, PRLE…SFVA, LPAL…LCSA, LCAL…LYLR, LRSL…ALDN, PKSL…SLTL, LPKL…SLPS, TQLR…FFAL, AKQL…WFGS, and VGNL…TFVG. An N-linked (GlcNAc...) asparagine glycan is attached at Asn63. Residues 71–76 and 94–108 each bind DNA; these read SNRIHH and KWNC…MHFP. Cys97 and Cys109 form a disulfide bridge. N-linked (GlcNAc...) asparagine glycosylation occurs at Asn128. DNA is bound by residues Tyr131, Arg151, and 178 to 180; that span reads YYK. The cysteines at positions 177 and 183 are disulfide-linked. N-linked (GlcNAc...) asparagine glycosylation occurs at Asn199. Residue Tyr207 participates in DNA binding. Asn209 and Asn241 each carry an N-linked (GlcNAc...) asparagine glycan. 2 cysteine pairs are disulfide-bonded: Cys254–Cys267 and Cys257–Cys264. Residue Cys257 is the site of S-palmitoyl cysteine attachment. Arg261 lines the DNA pocket. The S-palmitoyl cysteine moiety is linked to residue Cys264. An N-linked (GlcNAc...) asparagine glycan is attached at Asn339. A disulfide bridge links Cys469 with Cys499. Asn512 is a glycosylation site (N-linked (GlcNAc...) asparagine). Asn566 carries an N-linked (GlcNAc...) asparagine glycan. N-linked (GlcNAc...) asparagine glycans are attached at residues Asn668 and Asn693. The N-linked (GlcNAc...) asparagine glycan is linked to Asn730. Disulfide bonds link Cys763–Cys789 and Cys765–Cys808. Residues 817-837 traverse the membrane as a helical segment; the sequence is CFGISLLAMALGLVVPMLHHL. Over 838–1030 the chain is Cytoplasmic; the sequence is CGWDLWYCFH…NFCRGPTTAE (193 aa). Residues 865 to 1010 enclose the TIR domain; it reads LFYDAFVVFD…SFWAQLGTAL (146 aa).

The protein belongs to the Toll-like receptor family. Monomer and homodimer. Exists as a monomer in the absence of unmethylated cytidine-phosphate-guanosine (CpG) ligand. Proteolytic processing of an insertion loop (Z-loop) is required for homodimerization upon binding to the unmethylated CpG ligand leading to its activation. Interacts with MYD88 via their respective TIR domains. Interacts with BTK. Interacts (via transmembrane domain) with UNC93B1. Interacts with CD300LH; the interaction may promote full activation of TLR9-triggered innate responses. Interacts with CNPY3 and HSP90B1; this interaction is required for proper folding in the endoplasmic reticulum. Interacts with SMPDL3B. Interacts with CD82; this interaction is essential for TLR9-dependent myddosome formation in response to CpG stimulation. Activated by proteolytic cleavage of the flexible loop between repeats LRR14 and LRR15 within the ectodomain. Cleavage requires UNC93B1. Proteolytically processed by first removing the majority of the ectodomain by either asparagine endopeptidase (AEP) or a cathepsin followed by a trimming event that is solely cathepsin mediated and required for optimal receptor signaling. In terms of processing, palmitoylated by ZDHHC3 in the Golgi regulates TLR9 trafficking from the Golgi to endosomes. Depalmitoylation by PPT1 controls the release of TLR9 from UNC93B1 in endosomes.

It is found in the endoplasmic reticulum membrane. It localises to the endosome. Its subcellular location is the lysosome. The protein localises to the cytoplasmic vesicle. The protein resides in the phagosome. Functionally, key component of innate and adaptive immunity. TLRs (Toll-like receptors) control host immune response against pathogens through recognition of molecular patterns specific to microorganisms. TLR9 is a nucleotide-sensing TLR which is activated by unmethylated cytidine-phosphate-guanosine (CpG) dinucleotides. Acts via MYD88 and TRAF6, leading to NF-kappa-B activation, cytokine secretion and the inflammatory response. Upon CpG stimulation, induces B-cell proliferation, activation, survival and antibody production. The chain is Toll-like receptor 9 (TLR9) from Sus scrofa (Pig).